A 127-amino-acid polypeptide reads, in one-letter code: Aspartate 1-decarboxylase (127 aa).

The active-site Schiff-base intermediate with substrate; via pyruvic acid is serine 25. A Pyruvic acid (Ser) modification is found at serine 25. Residue threonine 57 participates in substrate binding. Tyrosine 58 serves as the catalytic Proton donor. 73–75 (GAA) contacts substrate.

The protein belongs to the PanD family. Heterooctamer of four alpha and four beta subunits. The cofactor is pyruvate. Post-translationally, is synthesized initially as an inactive proenzyme, which is activated by self-cleavage at a specific serine bond to produce a beta-subunit with a hydroxyl group at its C-terminus and an alpha-subunit with a pyruvoyl group at its N-terminus.

It localises to the cytoplasm. The catalysed reaction is L-aspartate + H(+) = beta-alanine + CO2. The protein operates within cofactor biosynthesis; (R)-pantothenate biosynthesis; beta-alanine from L-aspartate: step 1/1. In terms of biological role, catalyzes the pyruvoyl-dependent decarboxylation of aspartate to produce beta-alanine. The protein is Aspartate 1-decarboxylase of Listeria welshimeri serovar 6b (strain ATCC 35897 / DSM 20650 / CCUG 15529 / CIP 8149 / NCTC 11857 / SLCC 5334 / V8).